We begin with the raw amino-acid sequence, 518 residues long: Histone deacetylase 1 (518 aa).

The interval 22–333 is histone deacetylase; the sequence is RRVCYFYDAE…WCYETGVALG (312 aa). Histidine 153 acts as the Proton donor/acceptor in catalysis. 3 residues coordinate Zn(2+): aspartate 188, histidine 190, and aspartate 276. The segment at 387 to 518 is disordered; it reads HAPSVQFQER…QDQPSVHQKT (132 aa). Positions 401–412 are enriched in acidic residues; sequence ELPEQDEDQEDP. Over residues 413-435 the composition is skewed to basic and acidic residues; it reads DERHHADSDVEMDDVKPLDDSGR. Positions 503-518 are enriched in polar residues; the sequence is DNSNKLQDQPSVHQKT.

This sequence belongs to the histone deacetylase family. HD Type 1 subfamily. In terms of assembly, interacts with TPR3. Zn(2+) is required as a cofactor. Expressed in roots and leaves.

Its subcellular location is the nucleus. The enzyme catalyses N(6)-acetyl-L-lysyl-[histone] + H2O = L-lysyl-[histone] + acetate. Functionally, responsible for the deacetylation of lysine residues on the N-terminal part of the core histones (H2A, H2B, H3 and H4). Histone deacetylation gives a tag for epigenetic repression and plays an important role in transcriptional regulation, cell cycle progression and developmental events. Histone deacetylases act via the formation of large multiprotein complexes. Negatively regulates the expression of the NAC48/NAC6 gene that controls root growth in seedlings. Epigenetically represses the expression of NAC48/NAC6 by deacetylating 'Lys-9' (H3K9ac), 'Lys-14' (H3K14ac) and 'Lys-18' (H3K18ac) of histone H3, and 'Lys-5' (H4K5ac), 'Lys-12' (H4K12ac) and 'Lys-16' (H4K16ac) of histone H4. Functions in the regulation of gene expression in the whole genome. Acts as a chromatin remodeling regulator to promote the formation of a repressive chromatin state. Functions with MODD via its interaction with TPR3, to down-regulates the histone acetylation level at BZIP46 target genes. BZIP46 is a positive regulator of abscisic acid (ABA) signaling and drought stress tolerance. This is Histone deacetylase 1 from Oryza sativa subsp. japonica (Rice).